A 340-amino-acid chain; its full sequence is Alcohol dehydrogenase (340 aa).

Zn(2+) is bound by residues Cys-37, His-58, Cys-89, Cys-92, Cys-95, Cys-103, and Cys-145.

Belongs to the zinc-containing alcohol dehydrogenase family. Zn(2+) is required as a cofactor.

The catalysed reaction is a primary alcohol + NAD(+) = an aldehyde + NADH + H(+). The enzyme catalyses a secondary alcohol + NAD(+) = a ketone + NADH + H(+). The protein is Alcohol dehydrogenase (adh) of Staphylococcus epidermidis (strain ATCC 12228 / FDA PCI 1200).